The chain runs to 104 residues: UPF0145 protein VIBHAR_02090 (104 aa).

It belongs to the UPF0145 family.

In Vibrio campbellii (strain ATCC BAA-1116), this protein is UPF0145 protein VIBHAR_02090.